The sequence spans 1043 residues: Sarcoplasmic/endoplasmic reticulum calcium ATPase 2 (1043 aa).

At 1–48 (MENAHTKTVEEVLGHFGVNESTGLSLEQVKKLKERWGSNELPAEEGKT) the chain is on the cytoplasmic side. Residue S38 is modified to Phosphoserine. A helical membrane pass occupies residues 49–69 (LLELVIEQFEDLLVRILLLAA). Residues 70–89 (CISFVLAWFEEGEETITAFV) lie on the Lumenal side of the membrane. A helical transmembrane segment spans residues 90 to 110 (EPFVILLILVANAIVGVWQER). Residues 111–253 (NAENAIEALK…QERTPLQQKL (143 aa)) are Cytoplasmic-facing. Residues 254 to 273 (DEFGEQLSKVISLICIAVWI) traverse the membrane as a helical segment. Residues 274 to 295 (INIGHFNDPVHGGSWIRGAIYY) lie on the Lumenal side of the membrane. Y294 and Y295 each carry 3'-nitrotyrosine. The helical transmembrane segment at 296-313 (FKIAVALAVAAIPEGLPA) threads the bilayer. Ca(2+) is bound by residues V304, A305, I307, and E309. Residues 314–756 (VITTCLALGT…EEGRAIYNNM (443 aa)) are Cytoplasmic-facing. D351 functions as the 4-aspartylphosphate intermediate in the catalytic mechanism. Positions 351 and 353 each coordinate Mg(2+). T353 provides a ligand contact to ATP. T441 bears the Phosphothreonine mark. E442, R489, and K514 together coordinate ATP. S531 carries the post-translational modification Phosphoserine. Residue R559 coordinates ATP. The interval 575–594 (MHLEDSANFIKYETNLTFVG) is interaction with HAX1. The residue at position 580 (S580) is a Phosphoserine. 3 residues coordinate ATP: T624, G625, and D626. Phosphoserine occurs at positions 661 and 663. R677 and K683 together coordinate ATP. D702 serves as a coordination point for Mg(2+). Position 705 (N705) interacts with ATP. Residues 757 to 776 (KQFIRYLISSNVGEVVCIFL) form a helical membrane-spanning segment. Ca(2+) is bound by residues N767 and E770. Residues 777 to 786 (TAALGFPEAL) are Lumenal-facing. The chain crosses the membrane as a helical span at residues 787–807 (IPVQLLWVNLVTDGLPATALG). The interval 787–807 (IPVQLLWVNLVTDGLPATALG) is interaction with PLN. An interaction with TMEM64 and PDIA3 region spans residues 788-1043 (PVQLLWVNLV…DTNFSDMFWS (256 aa)). Residues N795, T798, and D799 each coordinate Ca(2+). At 808–827 (FNPPDLDIMNKPPRNPKEPL) the chain is on the cytoplasmic side. A helical transmembrane segment spans residues 828–850 (ISGWLFFRYLAIGCYVGAATVGA). Residues 851–896 (AAWWFIAADGGPRVSFYQLSHFLQCKEDNPDFEGVDCAIFESPYPM) lie on the Lumenal side of the membrane. The cysteines at positions 875 and 887 are disulfide-linked. The helical transmembrane segment at 897-916 (TMALSVLVTIEMCNALNSLS) threads the bilayer. E907 contributes to the Ca(2+) binding site. The Cytoplasmic portion of the chain corresponds to 917–929 (ENQSLLRMPPWEN). Residues 930–948 (IWLVGSICLSMSLHFLILY) form a helical membrane-spanning segment. Residues 931 to 942 (WLVGSICLSMSL) form an interaction with PLN region. At 949 to 963 (VEPLPLIFQITPLNL) the chain is on the lumenal side. A helical membrane pass occupies residues 964–984 (TQWLMVLKISLPVILMDETLK). The Cytoplasmic portion of the chain corresponds to 985-1043 (FVARNYLEPGKECAQPATKPSCSLSACTDGISWPFVLLIMPLVVWVYSTDTNFSDMFWS).

It belongs to the cation transport ATPase (P-type) (TC 3.A.3) family. Type IIA subfamily. In terms of assembly, interacts with sarcolipin (SLN); the interaction inhibits ATP2A2 Ca(2+) affinity. Interacts with phospholamban (PLN); the interaction inhibits ATP2A2 Ca(2+) affinity. Interacts with myoregulin (MRLN). Interacts with ARLN and ERLN; the interactions inhibit ATP2A2 Ca(2+) affinity. Interacts with STRIT1/DWORF; the interaction results in activation of ATP2A2. Interacts with the monomeric forms of SLN, PLN, ARLN, ERLN and STRI1/DWORF. Interacts with HAX1. Interacts with S100A8 and S100A9. Interacts with SLC35G1 and STIM1. Interacts with TMEM203. Interacts with TMEM64 and PDIA3. Interacts with TMX1. Interacts with TMX2. Interacts with VMP1; VMP1 competes with PLN and SLN to prevent them from forming an inhibitory complex with ATP2A2. Interacts with ULK1. Interacts with S100A1 in a Ca(2+)-dependent manner. Interacts with TUNAR. Interacts with FLVCR2; this interaction occurs in the absence of heme and promotes ATP2A2 proteasomal degradation; this complex is dissociated upon heme binding. Interacts with FNIP1. Interacts with TRAM2 (via C-terminus). Mg(2+) is required as a cofactor. Nitrated under oxidative stress. Nitration on the two tyrosine residues inhibits catalytic activity. In terms of processing, serotonylated on Gln residues by TGM2 in response to hypoxia, leading to its inactivation. As to expression, isoform 2 is highly expressed in heart and slow twitch skeletal muscle. Isoform 1 is widely expressed.

The protein resides in the endoplasmic reticulum membrane. The protein localises to the sarcoplasmic reticulum membrane. The catalysed reaction is Ca(2+)(in) + ATP + H2O = Ca(2+)(out) + ADP + phosphate + H(+). With respect to regulation, has different conformational states with differential Ca2+ affinity. The E1 conformational state (active form) shows high Ca(2+) affinity, while the E2 state exhibits low Ca(2+) affinity. Binding of ATP allosterically increases its affinity for subsequent binding of Ca2+. Reversibly inhibited by phospholamban (PLN) at low calcium concentrations. PLN inhibits ATP2A2 Ca(2+) affinity by disrupting its allosteric activation by ATP. Inhibited by sarcolipin (SLN) and myoregulin (MRLN). The inhibition is blocked by VMP1. Enhanced by STRIT1/DWORF; STRIT1 increases activity by displacing sarcolipin (SLN), phospholamban (PLN) and myoregulin (MRLN). Stabilizes SERCA2 in its E2 state. Its function is as follows. This magnesium-dependent enzyme catalyzes the hydrolysis of ATP coupled with the translocation of calcium from the cytosol to the sarcoplasmic reticulum lumen. Involved in autophagy in response to starvation. Upon interaction with VMP1 and activation, controls ER-isolation membrane contacts for autophagosome formation. Also modulates ER contacts with lipid droplets, mitochondria and endosomes. In coordination with FLVCR2 mediates heme-stimulated switching from mitochondrial ATP synthesis to thermogenesis. Involved in the regulation of the contraction/relaxation cycle. Acts as a regulator of TNFSF11-mediated Ca(2+) signaling pathways via its interaction with TMEM64 which is critical for the TNFSF11-induced CREB1 activation and mitochondrial ROS generation necessary for proper osteoclast generation. Association between TMEM64 and SERCA2 in the ER leads to cytosolic Ca(2+) spiking for activation of NFATC1 and production of mitochondrial ROS, thereby triggering Ca(2+) signaling cascades that promote osteoclast differentiation and activation. This is Sarcoplasmic/endoplasmic reticulum calcium ATPase 2 (Atp2a2) from Rattus norvegicus (Rat).